The primary structure comprises 131 residues: Thrombocorticin (131 aa).

Residues Cys-3 and Cys-111 are joined by a disulfide bond. Positions Arg-28 to Met-60 are disordered. Positions Ser-37–Thr-54 are enriched in low complexity. A Pseudodomain-swapping motif motif is present at residues Asp-117–Gly-131.

Its function is as follows. Binds to fucose and mannose in a calcium-dependent manner (in vitro). Acts as an agonist for human thrombopoietin receptor MPL (in vitro). Binding of sugar-moieties may promote the interaction with human MPL on the cell surface (in vitro). Catalyzes MPL dimerization and activation, and modulates internalization of the receptor (in vitro). Exhibits proliferation activity in murine recombinant Ba/F3 cells expressing human MPL (Ba/F3-huMPL) (in vitro). Induces phosphorylation of STAT5 in recombinant Ba/F3-huMPL cells, possibly by stimulating MPL on the cell surface to transduce signals via Jak/STAT signaling pathway (in vitro). Does not aggregate rabbit erythrocytes, indicating absent lectin-like agglutination activity (in vitro). The protein is Thrombocorticin of Corticium sp. (Marine sponge).